Reading from the N-terminus, the 512-residue chain is Citrate synthase (512 aa).

Catalysis depends on residues His288, His327, and Asp383. The tract at residues 483–512 is disordered; it reads AIPKTATGSKSQLSASIEQSFGEKISPQSH. Polar residues predominate over residues 488–501; sequence ATGSKSQLSASIEQ.

The protein belongs to the citrate synthase family.

The protein localises to the cytoplasm. It catalyses the reaction oxaloacetate + acetyl-CoA + H2O = citrate + CoA + H(+). It functions in the pathway carbohydrate metabolism; tricarboxylic acid cycle; isocitrate from oxaloacetate: step 1/2. This Dictyostelium discoideum (Social amoeba) protein is Citrate synthase (gltA).